Here is a 302-residue protein sequence, read N- to C-terminus: Probable histone acetyltransferase Rv0428c (302 aa).

It carries out the reaction L-lysyl-[histone] + acetyl-CoA = N(6)-acetyl-L-lysyl-[histone] + CoA + H(+). Its function is as follows. Shows histone acetyl transferase (HAT) activity with recombinant eukaryotic H3 histone expressed in bacteria as substrate and acetyl-CoA as donor. May be involved in survival under stress conditions. In Mycobacterium tuberculosis (strain ATCC 25618 / H37Rv), this protein is Probable histone acetyltransferase Rv0428c.